Consider the following 580-residue polypeptide: tRNA-guanine(15) transglycosylase (580 aa).

Asp-91 (nucleophile) is an active-site residue. Residues Asp-126 and Ala-192 each contribute to the substrate site. Residues Cys-275, Cys-277, and Cys-280 each coordinate Zn(2+). The 76-residue stretch at 504–579 folds into the PUA domain; it reads RMRVVVDEDA…LAVKVRRGVE (76 aa).

Belongs to the archaeosine tRNA-ribosyltransferase family. Zn(2+) is required as a cofactor.

It carries out the reaction guanosine(15) in tRNA + 7-cyano-7-deazaguanine = 7-cyano-7-carbaguanosine(15) in tRNA + guanine. It functions in the pathway tRNA modification; archaeosine-tRNA biosynthesis. Exchanges the guanine residue with 7-cyano-7-deazaguanine (preQ0) at position 15 in the dihydrouridine loop (D-loop) of archaeal tRNAs. The protein is tRNA-guanine(15) transglycosylase of Thermococcus onnurineus (strain NA1).